A 480-amino-acid polypeptide reads, in one-letter code: MERDEPPPSGGGGGGGSAGFLEPPAALPPPPRNGFCQDELAELDPGTISVSDDRAEQRTCLICGDRATGLHYGIISCEGCKGFFKRSICNKRVYRCSRDKNCVMSRKQRNRCQYCRLLKCLQMGMNRKAIREDGMPGGRNKSIGPVQISEEEIERIMSGQEFEEEANHWSNHGDSDHSSPGNRASESNQPSPGSTLSSSRSVELNGFMAFREQYMGMSVPPHYQYIPHLFSYSGHSPLLPQQARSLDPQSYSLIHQLLSAEDLEPLGTPMLIEDGYAVTQAELFALLCRLADELLFRQIAWIKKLPFFCELSIKDYTCLLSSTWQELILLSSLTVYSKQIFGELADVTAKYSPSDEELHRFSDEGMEVIERLIYLYHKFHQLKVSNEEYACMKAINFLNQDIRGLTSASQLEQLNKRYWYICQDFTEYKYTHQPNRFPDLMMCLPEIRYIAGKMVNVPLEQLPLLFKVVLHSCKTSVGKE.

Positions 1-32 (MERDEPPPSGGGGGGGSAGFLEPPAALPPPPR) are disordered. A DNA-binding region (nuclear receptor) is located at residues 57–132 (QRTCLICGDR…MGMNRKAIRE (76 aa)). Zn(2+)-binding residues include C60, C63, C77, C80, C96, C102, C112, and C115. 2 NR C4-type zinc fingers span residues 60-80 (CLICGDRATGLHYGIISCEGC) and 96-120 (CSRDKNCVMSRKQRNRCQYCRLLKC). Disordered stretches follow at residues 131–150 (REDGMPGGRNKSIGPVQISE) and 162–199 (FEEEANHWSNHGDSDHSSPGNRASESNQPSPGSTLSSS). The segment covering 165-177 (EANHWSNHGDSDH) has biased composition (basic and acidic residues). The segment at 172 to 253 (HGDSDHSSPG…RSLDPQSYSL (82 aa)) is sufficient for interaction with UIMC1. A compositionally biased stretch (low complexity) spans 187-199 (SNQPSPGSTLSSS). One can recognise an NR LBD domain in the interval 249–480 (QSYSLIHQLL…HSCKTSVGKE (232 aa)).

Belongs to the nuclear hormone receptor family. NR6 subfamily. In terms of assembly, homodimer. Interacts with UIMC1. As to expression, shows highest expression in the germ cells of the adult testis.

It localises to the nucleus. In terms of biological role, orphan nuclear receptor that binds to a response element containing the sequence 5'-TCAAGGTCA-3'. Acts as a regulator of embryonic stem cell pluripotency by mediating repression of POU5F1/OCT4: binds to the DR0 element within the POU5F1/OCT4 promoter and inhibits POU5F1/OCT4 expression during embryonic stem cell differentiation. Involved in the regulation of gene expression in germ cell development during gametogenesis. The sequence is that of Nuclear receptor subfamily 6 group A member 1 (NR6A1) from Homo sapiens (Human).